A 1521-amino-acid chain; its full sequence is MDVVNSTARAAVTSATAVTAVTGTGDRHPNPLSSAVAAASDVANAHGSSSWLGLFARVVLWLLQFVSMVLYYAIKLATISVPTLLYTLFSTSLTVTMNATTLMLIVAAMIGAISWVVRYRYLNMYSRLPPEPQRKEPDVDLFPDTHEEGIKSGLSNYFDEFLSAIKIFGYLERPVFHELTRSMQTRKLIAGESFNLEEEKGFCLVVDGLVEIFVKSSSYNRRYPHGPYFSPNSEAPSSDDEHPAPGQQRYQLLTEVRNGAPMSSLFSIMSLFTEDVPLRHADEDNSEPGTTTHSGLFPNYPASADFRKSRVRMDSVPNTPQMDASASSSANNLPGQLDRGLPHVPPISLDGTGFSKPQRPVPKRSNTTSAHPDIIARATVDTTVAIIPASAFRRLIKIYPKATAHIVHVILSRFQRVTLATAYNYLGLTNEVLQIERQMLKYTTQQLPNHLRGDALDRLKEKFKREVERMGEEDDVSKGIALHNARAGRRRRSTATLRKEAALQAFSKQRNISSMSGSSLAIPNAGDLVTHLQQSRGGGNRAQSVAFTDGPSPHLDVEREAVSPLAQRTFDPFVTPRSIHVALEKRETLDEDNLFRESILECMFRSIGLTGSGGSNKDADSNQASPRLISFDQRRQKALYTNHAFGFMDGLDGSADGDTESITSAGLSLPASPNPQFLAQEMRDEMEIVFFPKGSVLVEQGERNPGLYYVVDGFLDICTQEDAAASDVVHPTSRTSLHAMDSAQSIRSPQRSPQPFAESMRSGNKVDDAEIKSKPNRRSVALIKPGGLAGYVGTISSYRSFIEVVAKTDVYVGFLPLTSIERIVDRYPIVLLTMAKRLTNLLPRLILHIDFALEWLQVNAGQVIFHEGDESEAIYIVLNGRLRLVEDRKDGGMNVKAEYGQGESIGELEVLTETSRSGTLHAIRDTELVKFPRTLFNSLAQEHPNITIKISKIIASRMRALIDDPSTMLGIKDSSGRSSINKSSTTLNLRTVAVLPVSAGVPVVEFSNRLLSALTEVGAPNGATSLNSAAVLNHLGKHAFNRMGKLKLSQYLADLEEKYGLVIYVADTNVNAPWTQTCVAQADCVLMVGLADGSPEIGEYERFMLGMKSTARKILVLLHQERYSNSGLTRKWLKNRVWINGGHFHVQMTYSPNAVPIHPPAKPSGPTLRERVQILQAEIQKYTSRKVRHSPFYSPDAPFKGDFHRLARRLCGKSVGLVLGGGGARGIAQIGIIRAMQEAGIPIDIVGGTSIGAFIGALYARHADFVPIVNAAKKFSGRMASMWRFALDLTYPSASYTTGHEFNRGIFKAFGNTQIEDFWLDYYCNTTNISKSRAEFHTSGYAWWYVRASMSLAGLLLPLCDEGSMLLDGGYVDNLTVSHMKSLGSDVIFAVDVGALDDNTPQAFGDSLSGMWAFFNRWNPFSSVANPPTLAEIQARLAYVSSVDALERAKTLPGCIYMRPPIEEYGTLDFGKFMEIYGVGYKYGQEFLAKLRERGGVLPIGEEMGGKKGLRRTMAPRRASI.

Residues 1 to 50 (MDVVNSTARAAVTSATAVTAVTGTGDRHPNPLSSAVAAASDVANAHGSSS) are Cytoplasmic-facing. A helical transmembrane segment spans residues 51–71 (WLGLFARVVLWLLQFVSMVLY). Over 72-96 (YAIKLATISVPTLLYTLFSTSLTVT) the chain is Lumenal. Residues 97–117 (MNATTLMLIVAAMIGAISWVV) traverse the membrane as a helical segment. The Cytoplasmic portion of the chain corresponds to 118–1521 (RYRYLNMYSR…RTMAPRRASI (1404 aa)). Disordered regions lie at residues 280–301 (HADE…PNYP), 315–372 (SVPN…SAHP), and 738–768 (HAMD…KVDD). Composition is skewed to polar residues over residues 316–334 (VPNT…NNLP) and 738–753 (HAMD…QRSP). Residues 670–789 (PASP…GGLA) and 837–957 (RLTN…IASR) contribute to the a nucleoside 3',5'-cyclic phosphate site. The PNPLA domain maps to 1217 to 1381 (LVLGGGGARG…VDNLTVSHMK (165 aa)). Residues 1221 to 1226 (GGGARG) carry the GXGXXG motif. The short motif at 1248–1252 (GTSIG) is the GXSXG element. The active-site Nucleophile is Ser1250. The active-site Proton acceptor is the Asp1368. A DGA/G motif is present at residues 1368-1370 (DGG).

Belongs to the NTE family.

The protein localises to the endoplasmic reticulum membrane. The catalysed reaction is a 1-acyl-sn-glycero-3-phosphocholine + H2O = sn-glycerol 3-phosphocholine + a fatty acid + H(+). With respect to regulation, inhibited by organophosphorus esters. Functionally, intracellular phospholipase B that catalyzes the double deacylation of phosphatidylcholine (PC) to glycerophosphocholine (GroPCho). Plays an important role in membrane lipid homeostasis. Responsible for the rapid PC turnover in response to inositol, elevated temperatures, or when choline is present in the growth medium. This Chaetomium globosum (strain ATCC 6205 / CBS 148.51 / DSM 1962 / NBRC 6347 / NRRL 1970) (Soil fungus) protein is Lysophospholipase NTE1 (NTE1).